We begin with the raw amino-acid sequence, 45 residues long: Small polypeptide DEVIL 2 (45 aa).

Residues serine 14–aspartate 45 are required for DVL/RTFL small polypeptide activity. Residues arginine 17–isoleucine 33 form a helical membrane-spanning segment.

The protein belongs to the DVL/RTFL small polypeptides family. In terms of tissue distribution, mostly expressed in stems and, to a lower extent, in roots and leaves.

It is found in the cell membrane. In terms of biological role, small polypeptide acting as a regulatory molecule which coordinates cellular responses required for differentiation, growth and development, including leaves shape, pedicule elongation, inflorescence organization and fruit maturation, probably by restricting polar cell proliferation in lateral organs and coordinating socket cell recruitment and differentiation at trichome sites. The polypeptide is Small polypeptide DEVIL 2 (Arabidopsis thaliana (Mouse-ear cress)).